We begin with the raw amino-acid sequence, 475 residues long: Endoglucanase A (475 aa).

Positions 1–26 are cleaved as a signal peptide; the sequence is MKKTTAFLLCFLMIFTALLPMQNANA. The active site involves His147. Catalysis depends on Glu195, which acts as the Proton donor. Glu332 (nucleophile) is an active-site residue. In terms of domain architecture, Dockerin spans 409 to 474; it reads PVIVYGDYNN…LLGMVSKLPS (66 aa).

It belongs to the glycosyl hydrolase 5 (cellulase A) family.

It catalyses the reaction Endohydrolysis of (1-&gt;4)-beta-D-glucosidic linkages in cellulose, lichenin and cereal beta-D-glucans.. In terms of biological role, the biological conversion of cellulose to glucose generally requires three types of hydrolytic enzymes: (1) Endoglucanases which cut internal beta-1,4-glucosidic bonds; (2) Exocellobiohydrolases that cut the disaccharide cellobiose from the non-reducing end of the cellulose polymer chain; (3) Beta-1,4-glucosidases which hydrolyze the cellobiose and other short cello-oligosaccharides to glucose. The chain is Endoglucanase A (celCCA) from Ruminiclostridium cellulolyticum (strain ATCC 35319 / DSM 5812 / JCM 6584 / H10) (Clostridium cellulolyticum).